Reading from the N-terminus, the 585-residue chain is Arginine--tRNA ligase (585 aa).

Residues 131 to 141 (ANPTGPMHVGH) carry the 'HIGH' region motif.

This sequence belongs to the class-I aminoacyl-tRNA synthetase family. As to quaternary structure, monomer.

The protein localises to the cytoplasm. The catalysed reaction is tRNA(Arg) + L-arginine + ATP = L-arginyl-tRNA(Arg) + AMP + diphosphate. The chain is Arginine--tRNA ligase from Bartonella tribocorum (strain CIP 105476 / IBS 506).